Here is a 133-residue protein sequence, read N- to C-terminus: Transmembrane protein 60 (133 aa).

Helical transmembrane passes span 5-25, 35-55, 78-98, and 110-130; these read LAQR…MLVL, WFLI…MLIV, AWYL…CAKL, and FIPL…NVFF.

It localises to the membrane. This chain is Transmembrane protein 60 (Tmem60), found in Mus musculus (Mouse).